The chain runs to 2147 residues: Probable serine/threonine-protein kinase roco6 (2147 aa).

Residues 1–1055 are Extracellular-facing; sequence MNSIHKQHYT…LDHSRVEFNR (1055 aa). LRR repeat units lie at residues 69-89, 101-122, 124-145, 148-169, 171-192, 193-214, 215-236, 237-256, 306-328, 329-350, and 352-372; these read DMKY…MMIP, SISI…LKQL, QLIS…FPEE, LLRK…FNKF, ILED…LFPE, GIMR…PWFE, SLLT…PFHL, VRVS…VILR, HLTH…ANLT, ELVR…IVSY, and RLEH…PRRI. One can recognise a Roc domain in the interval 390–750; that stretch reads QGEPSYRVKL…DLLKKTVVEL (361 aa). The small GTPase-like stretch occupies residues 390–750; it reads QGEPSYRVKL…DLLKKTVVEL (361 aa). 403–410 provides a ligand contact to GTP; the sequence is GQENVGKT. 2 disordered regions span residues 491–582 and 602–621; these read NSNG…VGTN and SNLS…GGSG. Low complexity-rich tracts occupy residues 492 to 512, 519 to 531, 539 to 568, and 602 to 617; these read SNGV…NIHS, NVNS…SNNS, NSFL…NVNS, and SNLS…NNNS. GTP contacts are provided by residues 634–638 and 691–694; these read DCAGQ and THLD. In terms of domain architecture, COR spans 758-892; that stretch reads PELYLKLEKL…RFELMFPLDS (135 aa). 2 stretches are compositionally biased toward low complexity: residues 905-941 and 960-977; these read GNSY…SPST and SGNN…RSIS. Residues 905 to 995 are disordered; sequence GNSYVNNNNN…NSDLDLIGGG (91 aa). One copy of the WD 1 repeat lies at 1051–1098; it reads VEFNRWIQLSFAPAGLFSRLLIRLLISKEFDMKPILYWRNGVVVESQS. The chain crosses the membrane as a helical span at residues 1056–1076; sequence WIQLSFAPAGLFSRLLIRLLI. The Cytoplasmic segment spans residues 1077–2147; the sequence is SKEFDMKPIL…CGTNNVCIWS (1071 aa). LRR repeat units follow at residues 1237-1263, 1274-1297, and 1325-1348; these read ILSI…PPPP, DDNI…GSQP, and ESSL…TYKY. The 272-residue stretch at 1356-1627 folds into the Protein kinase domain; sequence FESPKLIGRG…KIVKRIKQII (272 aa). Residues 1362 to 1370 and Lys1383 each bind ATP; that span reads IGRGASGKI. Asp1481 acts as the Proton acceptor in catalysis. The disordered stretch occupies residues 1653-1699; it reads ADSQPFHYHQQQQPSLNSTNQLQQQQYSSVLTSPRSNLSDSSNSSQN. The span at 1662-1699 shows a compositional bias: low complexity; the sequence is QQQQPSLNSTNQLQQQQYSSVLTSPRSNLSDSSNSSQN. WD repeat units lie at residues 1735–1774 and 1778–1820; these read QPEA…QIFR and LHPG…LDDQ. The PH domain occupies 1821–1923; sequence SGTKSDFITK…WLTAINRVIN (103 aa). One copy of the WD 4 repeat lies at 2031–2068; it reads HYSKPITSMALVEKNVWISCEDESLSVWDGDTGSFIRK.

It belongs to the protein kinase superfamily. TKL Ser/Thr protein kinase family. ROCO subfamily.

The protein resides in the membrane. The catalysed reaction is L-seryl-[protein] + ATP = O-phospho-L-seryl-[protein] + ADP + H(+). The enzyme catalyses L-threonyl-[protein] + ATP = O-phospho-L-threonyl-[protein] + ADP + H(+). Functionally, may act as a serine/threonine-protein kinase and guanine-nucleotide releasing factor. The sequence is that of Probable serine/threonine-protein kinase roco6 (roco6) from Dictyostelium discoideum (Social amoeba).